The primary structure comprises 220 residues: Putative pyrophosphatase PpaX (220 aa).

The Nucleophile role is filled by Asp9.

It belongs to the HAD-like hydrolase superfamily. PpaX family. Mg(2+) is required as a cofactor.

It carries out the reaction diphosphate + H2O = 2 phosphate + H(+). In Caldanaerobacter subterraneus subsp. tengcongensis (strain DSM 15242 / JCM 11007 / NBRC 100824 / MB4) (Thermoanaerobacter tengcongensis), this protein is Putative pyrophosphatase PpaX.